A 192-amino-acid chain; its full sequence is Pyridoxal 5'-phosphate synthase subunit PdxT (192 aa).

46–48 (GES) contacts L-glutamine. Cysteine 78 (nucleophile) is an active-site residue. Residues arginine 106 and 135 to 136 (IR) contribute to the L-glutamine site. Catalysis depends on charge relay system residues histidine 171 and glutamate 173.

It belongs to the glutaminase PdxT/SNO family. In terms of assembly, in the presence of PdxS, forms a dodecamer of heterodimers. Only shows activity in the heterodimer.

It catalyses the reaction aldehydo-D-ribose 5-phosphate + D-glyceraldehyde 3-phosphate + L-glutamine = pyridoxal 5'-phosphate + L-glutamate + phosphate + 3 H2O + H(+). It carries out the reaction L-glutamine + H2O = L-glutamate + NH4(+). It participates in cofactor biosynthesis; pyridoxal 5'-phosphate biosynthesis. In terms of biological role, catalyzes the hydrolysis of glutamine to glutamate and ammonia as part of the biosynthesis of pyridoxal 5'-phosphate. The resulting ammonia molecule is channeled to the active site of PdxS. This is Pyridoxal 5'-phosphate synthase subunit PdxT from Kosmotoga olearia (strain ATCC BAA-1733 / DSM 21960 / TBF 19.5.1).